A 290-amino-acid chain; its full sequence is ATP synthase gamma chain (290 aa).

It belongs to the ATPase gamma chain family. In terms of assembly, F-type ATPases have 2 components, CF(1) - the catalytic core - and CF(0) - the membrane proton channel. CF(1) has five subunits: alpha(3), beta(3), gamma(1), delta(1), epsilon(1). CF(0) has three main subunits: a, b and c.

The protein localises to the cell membrane. Its function is as follows. Produces ATP from ADP in the presence of a proton gradient across the membrane. The gamma chain is believed to be important in regulating ATPase activity and the flow of protons through the CF(0) complex. This Heliobacterium modesticaldum (strain ATCC 51547 / Ice1) protein is ATP synthase gamma chain.